Here is a 373-residue protein sequence, read N- to C-terminus: Dual-specificity RNA methyltransferase RlmN (373 aa).

Glu-94 acts as the Proton acceptor in catalysis. The Radical SAM core domain maps to 100–339 (EDDRATLCVS…VIVRKTRGDD (240 aa)). A disulfide bridge links Cys-107 with Cys-344. Cys-114, Cys-118, and Cys-121 together coordinate [4Fe-4S] cluster. Residues 168-169 (GE), Ser-200, 222-224 (SIH), and Asn-301 contribute to the S-adenosyl-L-methionine site. Residue Cys-344 is the S-methylcysteine intermediate of the active site.

Belongs to the radical SAM superfamily. RlmN family. [4Fe-4S] cluster serves as cofactor.

Its subcellular location is the cytoplasm. The enzyme catalyses adenosine(2503) in 23S rRNA + 2 reduced [2Fe-2S]-[ferredoxin] + 2 S-adenosyl-L-methionine = 2-methyladenosine(2503) in 23S rRNA + 5'-deoxyadenosine + L-methionine + 2 oxidized [2Fe-2S]-[ferredoxin] + S-adenosyl-L-homocysteine. It carries out the reaction adenosine(37) in tRNA + 2 reduced [2Fe-2S]-[ferredoxin] + 2 S-adenosyl-L-methionine = 2-methyladenosine(37) in tRNA + 5'-deoxyadenosine + L-methionine + 2 oxidized [2Fe-2S]-[ferredoxin] + S-adenosyl-L-homocysteine. Its function is as follows. Specifically methylates position 2 of adenine 2503 in 23S rRNA and position 2 of adenine 37 in tRNAs. m2A2503 modification seems to play a crucial role in the proofreading step occurring at the peptidyl transferase center and thus would serve to optimize ribosomal fidelity. This chain is Dual-specificity RNA methyltransferase RlmN, found in Shewanella pealeana (strain ATCC 700345 / ANG-SQ1).